A 225-amino-acid polypeptide reads, in one-letter code: 2-C-methyl-D-erythritol 4-phosphate cytidylyltransferase (225 aa).

Belongs to the IspD/TarI cytidylyltransferase family. IspD subfamily.

It catalyses the reaction 2-C-methyl-D-erythritol 4-phosphate + CTP + H(+) = 4-CDP-2-C-methyl-D-erythritol + diphosphate. It participates in isoprenoid biosynthesis; isopentenyl diphosphate biosynthesis via DXP pathway; isopentenyl diphosphate from 1-deoxy-D-xylulose 5-phosphate: step 2/6. Catalyzes the formation of 4-diphosphocytidyl-2-C-methyl-D-erythritol from CTP and 2-C-methyl-D-erythritol 4-phosphate (MEP). In Chromobacterium violaceum (strain ATCC 12472 / DSM 30191 / JCM 1249 / CCUG 213 / NBRC 12614 / NCIMB 9131 / NCTC 9757 / MK), this protein is 2-C-methyl-D-erythritol 4-phosphate cytidylyltransferase.